The following is a 678-amino-acid chain: Methionine--tRNA ligase (678 aa).

Residues 18-28 (PYANGPIHLGH) carry the 'HIGH' region motif. Residues Cys149, Cys152, Cys162, and Cys165 each coordinate Zn(2+). Residues 334–338 (KMSKS) carry the 'KMSKS' region motif. Residue Lys337 coordinates ATP. Positions 577-678 (DFAKVDLRVA…SGATPGMRVM (102 aa)) constitute a tRNA-binding domain.

It belongs to the class-I aminoacyl-tRNA synthetase family. MetG type 1 subfamily. In terms of assembly, homodimer. It depends on Zn(2+) as a cofactor.

It localises to the cytoplasm. It carries out the reaction tRNA(Met) + L-methionine + ATP = L-methionyl-tRNA(Met) + AMP + diphosphate. In terms of biological role, is required not only for elongation of protein synthesis but also for the initiation of all mRNA translation through initiator tRNA(fMet) aminoacylation. The chain is Methionine--tRNA ligase from Marinobacter nauticus (strain ATCC 700491 / DSM 11845 / VT8) (Marinobacter aquaeolei).